A 398-amino-acid chain; its full sequence is O-methyltransferase mpaG (398 aa).

Serine 144 is a binding site for (4E,8E)-10-(4,6-dihydroxy-7-methyl-3-oxo-1,3-dihydro-2-benzofuran-5-yl)-4,8-dimethyldeca-4,8-dienoate. Serine 144 serves as a coordination point for 4-farnesyl-3,5-dihydroxy-6-methylphthalide. Serine 144 provides a ligand contact to 6-O-desmethylmycophenolate. Asparagine 197 contributes to the S-adenosyl-L-homocysteine binding site. Tyrosine 199 serves as a coordination point for (4E,8E)-10-(4,6-dihydroxy-7-methyl-3-oxo-1,3-dihydro-2-benzofuran-5-yl)-4,8-dimethyldeca-4,8-dienoate. Residue tyrosine 199 coordinates 4-farnesyl-3,5-dihydroxy-6-methylphthalide. Residue tyrosine 199 participates in 6-O-desmethylmycophenolate binding. Residues tyrosine 203, aspartate 237, glycine 239, histidine 244, aspartate 245, aspartate 264, and arginine 265 each coordinate S-adenosyl-L-homocysteine. Aspartate 264 contacts S-adenosyl-L-methionine. Residues arginine 265 and glutamine 267 each coordinate (4E,8E)-10-(4,6-dihydroxy-7-methyl-3-oxo-1,3-dihydro-2-benzofuran-5-yl)-4,8-dimethyldeca-4,8-dienoate. Arginine 265 contacts 6-O-desmethylmycophenolate. S-adenosyl-L-homocysteine contacts are provided by aspartate 286, isoleucine 287, and histidine 302. Position 303 (serine 303) interacts with (4E,8E)-10-(4,6-dihydroxy-7-methyl-3-oxo-1,3-dihydro-2-benzofuran-5-yl)-4,8-dimethyldeca-4,8-dienoate. Residue serine 303 participates in 4-farnesyl-3,5-dihydroxy-6-methylphthalide binding. Serine 303 provides a ligand contact to 6-O-desmethylmycophenolate. Histidine 306 (proton acceptor) is an active-site residue. Residues glutamate 335 and glutamate 362 contribute to the active site.

Belongs to the class I-like SAM-binding methyltransferase superfamily. Cation-independent O-methyltransferase family. COMT subfamily. In terms of assembly, homodimer.

It localises to the cytoplasm. It is found in the cytosol. It carries out the reaction (4E,8E)-10-(4,6-dihydroxy-7-methyl-3-oxo-1,3-dihydro-2-benzofuran-5-yl)-4,8-dimethyldeca-4,8-dienoate + S-adenosyl-L-methionine = (4E,8E)-10-(4-hydroxy-6-methoxy-7-methyl-3-oxo-1,3-dihydro-2-benzofuran-5-yl)-4,8-dimethyldeca-4,8-dienoate + S-adenosyl-L-homocysteine + H(+). The catalysed reaction is 4-farnesyl-3,5-dihydroxy-6-methylphthalide + S-adenosyl-L-methionine = 4-farnesyl-3,5-dihydroxy-6-methoxylphthalide + S-adenosyl-L-homocysteine + H(+). It catalyses the reaction 6-O-desmethylmycophenolate + S-adenosyl-L-methionine = mycophenolate + S-adenosyl-L-homocysteine + H(+). It participates in secondary metabolite biosynthesis; terpenoid biosynthesis. O-methyltransferase; part of the gene cluster that mediates the biosynthesis of mycophenolic acid (MPA), the first isolated antibiotic natural product in the world obtained from a culture of Penicillium brevicompactum in 1893. MpaG methylates farnesyl-DHMP-3C (FDHMP-3C) to yield MFDHMP-3C. The first step of the pathway is the synthesis of 5-methylorsellinic acid (5MOA) by the cytosolic polyketide synthase mpaC. 5MOA is then converted to the phthalide compound 5,7-dihydroxy-4,6-dimethylphthalide (DHMP) by the endoplasmic reticulum-bound cytochrome P450 monooxygenase mpaDE. MpaDE first catalyzes hydroxylation of 5-MOA to 4,6-dihydroxy-2-(hydroxymethyl)-3-methylbenzoic acid (DHMB). MpaDE then acts as a lactone synthase that catalyzes the ring closure to convert DHMB into DHMP. The next step is the prenylation of DHMP by the Golgi apparatus-associated prenyltransferase mpaA to yield farnesyl-DHMP (FDHMP). The ER-bound oxygenase mpaB then mediates the oxidative cleavage the C19-C20 double bond in FDHMP to yield FDHMP-3C via a mycophenolic aldehyde intermediate. The O-methyltransferase mpaG catalyzes the methylation of FDHMP-3C to yield MFDHMP-3C. MpaG and mpaB can also switch the order in which they act and, in this case, the conversion of FDHMP to MFDHMP-3C can take place via 5-O-methyl-FDHMP (MFDHMP). After the cytosolic methylation of FDHMP-3C, MFDHMP-3C enters into peroxisomes probably via free diffusion due to its low molecular weight. Upon a peroxisomal CoA ligation reaction, catalyzed by a beta-oxidation component enzyme acyl-CoA ligase ACL891, MFDHMP-3C-CoA would then be restricted to peroxisomes for the following beta-oxidation pathway steps. The peroxisomal beta-oxidation machinery than converts MFDHMP-3C-CoA into MPA_CoA, via a beta-oxidation chain-shortening process. Finally mpaH acts as a peroxisomal acyl-CoA hydrolase with high substrate specificity toward MPA-CoA to release the final product MPA. MpaH can also hydrolyze DMMPA-CoA to release demethylmycophenolic acid (DMMPA) that is further converted to MPA by mpaG. This chain is O-methyltransferase mpaG, found in Penicillium brevicompactum.